The following is a 237-amino-acid chain: Large ribosomal subunit protein uL3 (237 aa).

Disordered stretches follow at residues 133–155 and 213–237; these read ASHG…DPGK and PENA…EGAE. A compositionally biased stretch (polar residues) spans 135-150; the sequence is HGNSITHRSHGSTGQR. Q151 carries the post-translational modification N5-methylglutamine. Residues 220–237 are compositionally biased toward low complexity; the sequence is AGLRAGAKAEAAATEGAE.

This sequence belongs to the universal ribosomal protein uL3 family. In terms of assembly, part of the 50S ribosomal subunit. Forms a cluster with proteins L14 and L19. Methylated by PrmB.

One of the primary rRNA binding proteins, it binds directly near the 3'-end of the 23S rRNA, where it nucleates assembly of the 50S subunit. The chain is Large ribosomal subunit protein uL3 from Brucella canis (strain ATCC 23365 / NCTC 10854 / RM-666).